The sequence spans 370 residues: Glucan endo-1,3-beta-glucosidase, basic vacuolar isoform GLB (370 aa).

The N-terminal stretch at 1-32 is a signal peptide; the sequence is MSTSDKHNTPQMAAITLLGLLLVASTIEIAGA. At Gln33 the chain carries Pyrrolidone carboxylic acid. Glu128 serves as the catalytic Proton donor. Glu273 functions as the Nucleophile in the catalytic mechanism. The propeptide at 349-370 is removed in mature form; it reads VSGGVWDSSVETNATASLISEM. N-linked (GlcNAc...) asparagine glycosylation occurs at Asn361.

It belongs to the glycosyl hydrolase 17 family. In terms of tissue distribution, is expressed primarily in epidermal cell of healthy plant, and following induction by ethylene, accumulates in mesophyll cells.

The protein resides in the vacuole. It carries out the reaction Hydrolysis of (1-&gt;3)-beta-D-glucosidic linkages in (1-&gt;3)-beta-D-glucans.. Its function is as follows. Implicated in the defense of plants against pathogens. In Nicotiana tabacum (Common tobacco), this protein is Glucan endo-1,3-beta-glucosidase, basic vacuolar isoform GLB.